Consider the following 210-residue polypeptide: Orotate phosphoribosyltransferase (210 aa).

5-phospho-alpha-D-ribose 1-diphosphate is bound by residues arginine 94, lysine 98, histidine 100, and 120–128; that span reads EDLISTGGS. Orotate is bound at residue serine 124.

This sequence belongs to the purine/pyrimidine phosphoribosyltransferase family. PyrE subfamily. As to quaternary structure, homodimer. Requires Mg(2+) as cofactor.

It carries out the reaction orotidine 5'-phosphate + diphosphate = orotate + 5-phospho-alpha-D-ribose 1-diphosphate. Its pathway is pyrimidine metabolism; UMP biosynthesis via de novo pathway; UMP from orotate: step 1/2. In terms of biological role, catalyzes the transfer of a ribosyl phosphate group from 5-phosphoribose 1-diphosphate to orotate, leading to the formation of orotidine monophosphate (OMP). The protein is Orotate phosphoribosyltransferase of Bacillus cereus (strain ATCC 10987 / NRS 248).